Reading from the N-terminus, the 703-residue chain is Glycogen [starch] synthase, liver (703 aa).

S8 bears the Phosphoserine; by PKA mark. Phosphoserine is present on S11. Residue K40 participates in UDP binding. UDP-alpha-D-glucose contacts are provided by H205 and R211. H291, E292, Q294, H297, and K301 together coordinate alpha-D-glucose 6-phosphate. R331 contacts UDP. A UDP-alpha-D-glucose-binding site is contributed by R331. H501 contacts alpha-D-glucose 6-phosphate. The UDP-alpha-D-glucose site is built by E510, W512, and G513. A UDP-binding site is contributed by T515. Positions 582 and 586 each coordinate alpha-D-glucose 6-phosphate. S627 bears the Phosphoserine mark. A disordered region spans residues P628 to N703. Phosphoserine; by GSK3-alpha and GSK3-beta occurs at positions 641, 645, 649, and 653. The span at S647–S657 shows a compositional bias: low complexity. Phosphoserine; by CK2 is present on S657. Residues D658–A674 show a composition bias toward acidic residues. S683 is modified (phosphoserine).

Belongs to the glycosyltransferase 3 family. Part of the glycogen synthase (GS)-glycogenin complex, a heterooctamer composed of a tetramer of GS and 2 dimers of glycogenin, where each GS protomer binds to one glycogenin subunit (via glycogenin C-terminus); the GS tetramer may dissociate from glycogenin dimers to continue glycogen polymerization on its own. May also form a heterooctamer complex with GYG1 (via GYG1 C-terminus). Post-translationally, primed phosphorylation at Ser-657 (site 5) by CSNK2A1 and CSNK2A2 is required for inhibitory phosphorylation at Ser-641 (site 3a), Ser-645 (site 3b), Ser-649 (site 3c) and Ser-653 (site 4) by GSK3A an GSK3B. Dephosphorylation at Ser-641 and Ser-645 by PP1 activates the enzyme. Phosphorylation at Ser-8 is not required for interaction with GYG1. Interaction with GYG1 does not regulate the phosphorylation at Ser-8 and Ser-641. In terms of tissue distribution, specifically expressed in liver (at protein level).

The catalysed reaction is [(1-&gt;4)-alpha-D-glucosyl](n) + UDP-alpha-D-glucose = [(1-&gt;4)-alpha-D-glucosyl](n+1) + UDP + H(+). The protein operates within glycan biosynthesis; glycogen biosynthesis. With respect to regulation, allosteric activation by glucose-6-phosphate. Phosphorylation reduces the activity towards UDP-glucose. When in the non-phosphorylated state, glycogen synthase does not require glucose-6-phosphate as an allosteric activator; when phosphorylated it does. In terms of biological role, glycogen synthase participates in the glycogen biosynthetic process along with glycogenin and glycogen branching enzyme. Extends the primer composed of a few glucose units formed by glycogenin by adding new glucose units to it. In this context, glycogen synthase transfers the glycosyl residue from UDP-Glc to the non-reducing end of alpha-1,4-glucan. The chain is Glycogen [starch] synthase, liver from Homo sapiens (Human).